Reading from the N-terminus, the 307-residue chain is UDP-3-O-acyl-N-acetylglucosamine deacetylase (307 aa).

Zn(2+) contacts are provided by histidine 79, histidine 239, and aspartate 243. Histidine 266 serves as the catalytic Proton donor.

The protein belongs to the LpxC family. The cofactor is Zn(2+).

The catalysed reaction is a UDP-3-O-[(3R)-3-hydroxyacyl]-N-acetyl-alpha-D-glucosamine + H2O = a UDP-3-O-[(3R)-3-hydroxyacyl]-alpha-D-glucosamine + acetate. The protein operates within glycolipid biosynthesis; lipid IV(A) biosynthesis; lipid IV(A) from (3R)-3-hydroxytetradecanoyl-[acyl-carrier-protein] and UDP-N-acetyl-alpha-D-glucosamine: step 2/6. Functionally, catalyzes the hydrolysis of UDP-3-O-myristoyl-N-acetylglucosamine to form UDP-3-O-myristoylglucosamine and acetate, the committed step in lipid A biosynthesis. This is UDP-3-O-acyl-N-acetylglucosamine deacetylase from Tolumonas auensis (strain DSM 9187 / NBRC 110442 / TA 4).